The chain runs to 295 residues: Probable endonuclease 4 (295 aa).

Histidine 78, histidine 118, glutamate 154, aspartate 188, histidine 191, histidine 225, aspartate 238, histidine 240, and glutamate 270 together coordinate Zn(2+).

It belongs to the AP endonuclease 2 family. The cofactor is Zn(2+).

The enzyme catalyses Endonucleolytic cleavage to 5'-phosphooligonucleotide end-products.. Functionally, endonuclease IV plays a role in DNA repair. It cleaves phosphodiester bonds at apurinic or apyrimidinic (AP) sites, generating a 3'-hydroxyl group and a 5'-terminal sugar phosphate. The sequence is that of Probable endonuclease 4 from Vibrio parahaemolyticus serotype O3:K6 (strain RIMD 2210633).